The primary structure comprises 130 residues: Histone H2A type 1-K (130 aa).

Positions 1-22 (MSGRGKQGGKARAKAKTRSSRA) are disordered. Serine 2 carries the post-translational modification N-acetylserine. Serine 2 bears the Phosphoserine; by RPS6KA5 mark. Arginine 4 bears the Citrulline; alternate mark. At arginine 4 the chain carries Symmetric dimethylarginine; by PRMT5; alternate. 2 positions are modified to N6-(2-hydroxyisobutyryl)lysine; alternate: lysine 6 and lysine 10. The residue at position 6 (lysine 6) is an N6-(beta-hydroxybutyryl)lysine; alternate. N6-acetyllysine; alternate occurs at positions 6 and 10. A compositionally biased stretch (basic residues) spans 7–19 (QGGKARAKAKTRS). Lysine 10 is modified (N6-lactoyllysine; alternate). Lysine 10 carries the post-translational modification N6-succinyllysine; alternate. Glycyl lysine isopeptide (Lys-Gly) (interchain with G-Cter in ubiquitin) cross-links involve residues lysine 14 and lysine 16. Lysine 37 is subject to N6-(2-hydroxyisobutyryl)lysine; alternate. Lysine 37 is modified (N6-(beta-hydroxybutyryl)lysine; alternate). At lysine 37 the chain carries N6-crotonyllysine; alternate. N6-(2-hydroxyisobutyryl)lysine occurs at positions 75 and 76. Residue lysine 96 is modified to N6-(2-hydroxyisobutyryl)lysine; alternate. Lysine 96 is modified (N6-succinyllysine; alternate). The residue at position 96 (lysine 96) is an N6-glutaryllysine; alternate. Position 105 is an N5-methylglutamine (glutamine 105). Lysine 119 carries the post-translational modification N6-(2-hydroxyisobutyryl)lysine; alternate. An N6-crotonyllysine; alternate mark is found at lysine 119 and lysine 120. Residues lysine 119 and lysine 120 each carry the N6-glutaryllysine; alternate modification. Lysine 120 carries the N6-(beta-hydroxybutyryl)lysine; alternate modification. A Glycyl lysine isopeptide (Lys-Gly) (interchain with G-Cter in ubiquitin); alternate cross-link involves residue lysine 120. The residue at position 121 (threonine 121) is a Phosphothreonine; by DCAF1. N6-(beta-hydroxybutyryl)lysine; alternate is present on lysine 126. Residue lysine 126 is modified to N6-crotonyllysine; alternate. Residue lysine 126 is modified to N6-glutaryllysine; alternate.

It belongs to the histone H2A family. As to quaternary structure, the nucleosome is a histone octamer containing two molecules each of H2A, H2B, H3 and H4 assembled in one H3-H4 heterotetramer and two H2A-H2B heterodimers. The octamer wraps approximately 147 bp of DNA. In terms of processing, deiminated on Arg-4 in granulocytes upon calcium entry. Post-translationally, monoubiquitination of Lys-120 (H2AK119Ub) by RING1, TRIM37 and RNF2/RING2 complex gives a specific tag for epigenetic transcriptional repression and participates in X chromosome inactivation of female mammals. It is involved in the initiation of both imprinted and random X inactivation. Ubiquitinated H2A is enriched in inactive X chromosome chromatin. Ubiquitination of H2A functions downstream of methylation of 'Lys-27' of histone H3 (H3K27me). H2AK119Ub by RNF2/RING2 can also be induced by ultraviolet and may be involved in DNA repair. Following DNA double-strand breaks (DSBs), it is ubiquitinated through 'Lys-63' linkage of ubiquitin moieties by the E2 ligase UBE2N and the E3 ligases RNF8 and RNF168, leading to the recruitment of repair proteins to sites of DNA damage. Ubiquitination at Lys-14 and Lys-16 (H2AK13Ub and H2AK15Ub, respectively) in response to DNA damage is initiated by RNF168 that mediates monoubiquitination at these 2 sites, and 'Lys-63'-linked ubiquitin are then conjugated to monoubiquitin; RNF8 is able to extend 'Lys-63'-linked ubiquitin chains in vitro. Deubiquitinated by USP51 at Lys-14 and Lys-16 (H2AK13Ub and H2AK15Ub, respectively) after damaged DNA is repaired. H2AK119Ub and ionizing radiation-induced 'Lys-63'-linked ubiquitination (H2AK13Ub and H2AK15Ub) are distinct events. Phosphorylation on Ser-2 (H2AS1ph) is enhanced during mitosis. Phosphorylation on Ser-2 by RPS6KA5/MSK1 directly represses transcription. Acetylation of H3 inhibits Ser-2 phosphorylation by RPS6KA5/MSK1. Phosphorylation at Thr-121 (H2AT120ph) by DCAF1 is present in the regulatory region of many tumor suppresor genes and down-regulates their transcription. In terms of processing, symmetric dimethylation on Arg-4 by the PRDM1/PRMT5 complex may play a crucial role in the germ-cell lineage. Post-translationally, glutamine methylation at Gln-105 (H2AQ104me) by FBL is specifically dedicated to polymerase I. It is present at 35S ribosomal DNA locus and impairs binding of the FACT complex. Crotonylation (Kcr) is specifically present in male germ cells and marks testis-specific genes in post-meiotic cells, including X-linked genes that escape sex chromosome inactivation in haploid cells. Crotonylation marks active promoters and enhancers and confers resistance to transcriptional repressors. It is also associated with post-meiotically activated genes on autosomes. In terms of processing, hydroxybutyrylation of histones is induced by starvation. Post-translationally, lactylated in macrophages by EP300/P300 by using lactoyl-CoA directly derived from endogenous or exogenous lactate, leading to stimulates gene transcription.

It localises to the nucleus. The protein resides in the chromosome. In terms of biological role, core component of nucleosome. Nucleosomes wrap and compact DNA into chromatin, limiting DNA accessibility to the cellular machineries which require DNA as a template. Histones thereby play a central role in transcription regulation, DNA repair, DNA replication and chromosomal stability. DNA accessibility is regulated via a complex set of post-translational modifications of histones, also called histone code, and nucleosome remodeling. The polypeptide is Histone H2A type 1-K (Mus musculus (Mouse)).